The following is a 321-amino-acid chain: Putative ribose-phosphate pyrophosphokinase 2 (321 aa).

ATP-binding positions include 41-43 and 100-101; these read DGE and RQ. A Mg(2+)-binding site is contributed by histidine 134. D-ribose 5-phosphate is bound by residues aspartate 223 and 227–231; that span reads NTGVT.

The protein belongs to the ribose-phosphate pyrophosphokinase family. Class I subfamily. As to quaternary structure, homohexamer. The cofactor is Mg(2+).

It is found in the cytoplasm. The catalysed reaction is D-ribose 5-phosphate + ATP = 5-phospho-alpha-D-ribose 1-diphosphate + AMP + H(+). The protein operates within metabolic intermediate biosynthesis; 5-phospho-alpha-D-ribose 1-diphosphate biosynthesis; 5-phospho-alpha-D-ribose 1-diphosphate from D-ribose 5-phosphate (route I): step 1/1. In terms of biological role, involved in the biosynthesis of the central metabolite phospho-alpha-D-ribosyl-1-pyrophosphate (PRPP) via the transfer of pyrophosphoryl group from ATP to 1-hydroxyl of ribose-5-phosphate (Rib-5-P). The sequence is that of Putative ribose-phosphate pyrophosphokinase 2 from Lactococcus lactis subsp. lactis (strain IL1403) (Streptococcus lactis).